A 152-amino-acid polypeptide reads, in one-letter code: Transcriptional repressor NrdR (152 aa).

The segment at 3-34 is a zinc-finger region; that stretch reads CPFCNHGELKVIDSRNSPEANAIKRRRECLRC. Residues 48–138 enclose the ATP-cone domain; the sequence is IQVLKRDGRY…VYRRFRDVGE (91 aa).

It belongs to the NrdR family. It depends on Zn(2+) as a cofactor.

In terms of biological role, negatively regulates transcription of bacterial ribonucleotide reductase nrd genes and operons by binding to NrdR-boxes. The polypeptide is Transcriptional repressor NrdR (Chlamydia muridarum (strain MoPn / Nigg)).